The sequence spans 356 residues: S-adenosylmethionine:tRNA ribosyltransferase-isomerase (356 aa).

It belongs to the QueA family. Monomer.

The protein resides in the cytoplasm. The catalysed reaction is 7-aminomethyl-7-carbaguanosine(34) in tRNA + S-adenosyl-L-methionine = epoxyqueuosine(34) in tRNA + adenine + L-methionine + 2 H(+). Its pathway is tRNA modification; tRNA-queuosine biosynthesis. Its function is as follows. Transfers and isomerizes the ribose moiety from AdoMet to the 7-aminomethyl group of 7-deazaguanine (preQ1-tRNA) to give epoxyqueuosine (oQ-tRNA). The chain is S-adenosylmethionine:tRNA ribosyltransferase-isomerase from Shigella boydii serotype 4 (strain Sb227).